The primary structure comprises 292 residues: Ribosomal protein L11 methyltransferase (292 aa).

S-adenosyl-L-methionine-binding residues include threonine 144, glycine 165, aspartate 187, and asparagine 229.

The protein belongs to the methyltransferase superfamily. PrmA family.

The protein resides in the cytoplasm. It catalyses the reaction L-lysyl-[protein] + 3 S-adenosyl-L-methionine = N(6),N(6),N(6)-trimethyl-L-lysyl-[protein] + 3 S-adenosyl-L-homocysteine + 3 H(+). Its function is as follows. Methylates ribosomal protein L11. The protein is Ribosomal protein L11 methyltransferase of Pseudomonas fluorescens (strain ATCC BAA-477 / NRRL B-23932 / Pf-5).